Consider the following 84-residue polypeptide: Toluene-4-monooxygenase system, hydroxylase component subunit gamma (84 aa).

It belongs to the TmoB/XamoB family. In terms of assembly, the alkene monooxygenase multicomponent enzyme system is composed of an electron transfer component and a monooxygenase component interacting with the effector protein TmoD. The electron transfer component is composed of a ferredoxin reductase (TmoF) and a ferredoxin (TmoC), and the monooxygenase component is formed by a heterohexamer (dimer of heterotrimers) of two alpha subunits (TmoA), two beta subunits (TmoE) and two gamma subunits (TmoB).

It carries out the reaction toluene + NADH + O2 + H(+) = 4-methylphenol + NAD(+) + H2O. It participates in xenobiotic degradation; toluene degradation. Its activity is regulated as follows. Inhibited by Zn(2+) and Cu(2+). Component of the toluene-4-monooxygenase multicomponent enzyme system which catalyzes the O2- and NADH-dependent hydroxylation of toluene to form p-cresol. Also able to convert benzene to phenol, catechol, and 1,2,3-trihydroxybenzene by successive hydroxylations. The chain is Toluene-4-monooxygenase system, hydroxylase component subunit gamma from Ectopseudomonas mendocina (Pseudomonas mendocina).